Consider the following 855-residue polypeptide: DNA mismatch repair protein MutS (855 aa).

616–623 (GPNMGGKS) contributes to the ATP binding site.

Belongs to the DNA mismatch repair MutS family.

Functionally, this protein is involved in the repair of mismatches in DNA. It is possible that it carries out the mismatch recognition step. This protein has a weak ATPase activity. In Salmonella paratyphi C (strain RKS4594), this protein is DNA mismatch repair protein MutS.